The chain runs to 300 residues: Chaperone protein dnaJ 50 (300 aa).

Positions 1 to 27 are cleaved as a signal peptide; the sequence is MAPPVTERWCLALILLFLSLFVQSSTA. At 28-122 the chain is on the lumenal side; that stretch reads IYCGAEDCYA…RAKYGHKSDP (95 aa). The J domain maps to 34-98; it reads DCYALLGVAQ…TTRAQYDYAI (65 aa). Residues asparagine 46 and asparagine 88 are each glycosylated (N-linked (GlcNAc...) asparagine). Residues 123–143 traverse the membrane as a helical segment; it reads RAVLVGLLVVLSAFQYLNNVA. At 144-206 the chain is on the cytoplasmic side; the sequence is RYNEAIATVK…LQIKGAEKPS (63 aa). The chain crosses the membrane as a helical span at residues 207 to 227; the sequence is VWELLGVRFILLPYTIIKLLV. Topologically, residues 228–300 are lumenal; it reads WYSSWVWRYK…EMRKESKRRR (73 aa).

Expressed in leaves, flower buds and flowers.

The protein resides in the endoplasmic reticulum membrane. Its function is as follows. May play a role in protein folding in the endoplasmic reticulum. The protein is Chaperone protein dnaJ 50 (C50) of Arabidopsis thaliana (Mouse-ear cress).